A 286-amino-acid polypeptide reads, in one-letter code: NAD kinase (286 aa).

The active-site Proton acceptor is the Asp74. NAD(+) contacts are provided by residues 74 to 75 (DG), 148 to 149 (ND), Asp178, Ala186, 189 to 194 (TAYNLS), and Gln244.

This sequence belongs to the NAD kinase family. It depends on a divalent metal cation as a cofactor.

Its subcellular location is the cytoplasm. The enzyme catalyses NAD(+) + ATP = ADP + NADP(+) + H(+). Functionally, involved in the regulation of the intracellular balance of NAD and NADP, and is a key enzyme in the biosynthesis of NADP. Catalyzes specifically the phosphorylation on 2'-hydroxyl of the adenosine moiety of NAD to yield NADP. The sequence is that of NAD kinase from Campylobacter jejuni (strain RM1221).